The sequence spans 481 residues: UDP-glycosyltransferase 72E3 (481 aa).

Catalysis depends on His-18, which acts as the Proton acceptor. An an anthocyanidin-binding site is contributed by His-18. The active-site Charge relay is Asp-111. Ala-346, Gln-348, His-363, Trp-366, Ser-368, and Glu-371 together coordinate UDP-alpha-D-glucose. An anthocyanidin is bound at residue Ala-386. UDP-alpha-D-glucose contacts are provided by Glu-387 and Gln-388.

The protein belongs to the UDP-glycosyltransferase family. As to expression, expressed in seedlings and roots, and at lower levels in flowers and siliques.

It catalyses the reaction (E)-4-coumarate + UDP-alpha-D-glucose = 4-O-(beta-D-glucosyl)-trans-4-coumarate + UDP + H(+). The enzyme catalyses (E)-sinapyl alcohol + UDP-alpha-D-glucose = 4-O-(beta-D-glucosyl)-trans-4-sinapoyl alcohol + UDP + H(+). The catalysed reaction is (E)-coniferol + UDP-alpha-D-glucose = 4-O-(beta-D-glucosyl)-(E)-coniferol + UDP + H(+). It carries out the reaction (E)-sinapate + UDP-alpha-D-glucose = 4-O-(beta-D-glucosyl)-trans-sinapate + UDP + H(+). It catalyses the reaction (E)-coniferaldehyde + UDP-alpha-D-glucose = 4-O-(beta-D-glucosyl)-4-(E)-coniferyl aldehyde + UDP + H(+). The enzyme catalyses (E)-sinapaldehyde + UDP-alpha-D-glucose = 4-O-(beta-D-glucosyl)-4-trans-sinapoyl aldehyde + UDP + H(+). In terms of biological role, involved in the O-glucosylation of monolignols (alcohol monomers of lignin). Glucosylates coniferyl alcohol to form coniferyl alcohol 4-O-glucoside. Glucosylates sinapyl alcohol to form sinapyl alcohol 4-O-glucoside. Possesses low activity with sinapate as substrate. In Arabidopsis thaliana (Mouse-ear cress), this protein is UDP-glycosyltransferase 72E3.